Reading from the N-terminus, the 259-residue chain is Ribonuclease HII (259 aa).

An RNase H type-2 domain is found at threonine 70–glutamate 258. A divalent metal cation is bound by residues aspartate 76, glutamate 77, and aspartate 168.

It belongs to the RNase HII family. Requires Mn(2+) as cofactor. It depends on Mg(2+) as a cofactor.

Its subcellular location is the cytoplasm. It catalyses the reaction Endonucleolytic cleavage to 5'-phosphomonoester.. Functionally, endonuclease that specifically degrades the RNA of RNA-DNA hybrids. The chain is Ribonuclease HII from Streptococcus pneumoniae (strain Taiwan19F-14).